We begin with the raw amino-acid sequence, 265 residues long: Capsule polysaccharide export inner-membrane protein BexB (265 aa).

The next 6 helical transmembrane spans lie at 37-57 (IGFF…VMMW), 64-84 (KFST…AMMW), 118-138 (LLEV…LVMI), 151-171 (LIAW…ICAI), 178-198 (FGKI…AFFF), and 235-255 (ESIG…LVMV). Residues 37–258 (IGFFWLFVEP…LLGLVMVKNF (222 aa)) form the ABC transmembrane type-2 domain.

It belongs to the ABC-2 integral membrane protein family.

It is found in the cell inner membrane. Functionally, may form an ATP-driven capsule polysaccharide export apparatus, in association with the BexA, BexC and BexD proteins. This chain is Capsule polysaccharide export inner-membrane protein BexB (bexB), found in Haemophilus influenzae.